The sequence spans 321 residues: MKPTFLDFEQPIAELENKIEELRFVQDDSVLDISEEIARLQKKSLELTKTLYAKLTPSQIAMVARHPQRPYTLDYIQAIFTDFEELHGDRAFADDAAIVGGLARFNGQSVMVIGHQKGRDTKEKIRRNFGMPHPEGYRKALRLMKLAEKFGIPVLTFVDTTGAWPGIGAEERGQSEAIGRNLYEMTNLRVPIVVTVIGEGGSGGALAIAVGDHVNMLQYATYSVISPEGCASILWKTAERASDAAEALGITAPRLKTLGLIDRVVTEPVGGAHRDHAQMMTTLKRVLQDQLKEVQSKPMDALLKERFDRLMSYGRFKEDAA.

The 262-residue stretch at 32–293 folds into the CoA carboxyltransferase C-terminal domain; it reads DISEEIARLQ…KRVLQDQLKE (262 aa).

Belongs to the AccA family. As to quaternary structure, acetyl-CoA carboxylase is a heterohexamer composed of biotin carboxyl carrier protein (AccB), biotin carboxylase (AccC) and two subunits each of ACCase subunit alpha (AccA) and ACCase subunit beta (AccD).

It is found in the cytoplasm. It carries out the reaction N(6)-carboxybiotinyl-L-lysyl-[protein] + acetyl-CoA = N(6)-biotinyl-L-lysyl-[protein] + malonyl-CoA. The protein operates within lipid metabolism; malonyl-CoA biosynthesis; malonyl-CoA from acetyl-CoA: step 1/1. Its function is as follows. Component of the acetyl coenzyme A carboxylase (ACC) complex. First, biotin carboxylase catalyzes the carboxylation of biotin on its carrier protein (BCCP) and then the CO(2) group is transferred by the carboxyltransferase to acetyl-CoA to form malonyl-CoA. This is Acetyl-coenzyme A carboxylase carboxyl transferase subunit alpha from Chromobacterium violaceum (strain ATCC 12472 / DSM 30191 / JCM 1249 / CCUG 213 / NBRC 12614 / NCIMB 9131 / NCTC 9757 / MK).